Reading from the N-terminus, the 66-residue chain is Large ribosomal subunit protein uL29 (66 aa).

It belongs to the universal ribosomal protein uL29 family.

The sequence is that of Large ribosomal subunit protein uL29 from Allorhizobium ampelinum (strain ATCC BAA-846 / DSM 112012 / S4) (Agrobacterium vitis (strain S4)).